The primary structure comprises 122 residues: Ferredoxin (122 aa).

The disordered stretch occupies residues 1 to 33 (MSHDRRLTVGSLLPNQPRPVAVPKAPSVVQPSK). Residues 8–14 (TVGSLLP) form a targeting peptide region. Residues 40–122 (AIIRLEQNGR…FRLACQANME (83 aa)) enclose the 2Fe-2S ferredoxin-type domain. The [2Fe-2S] cluster site is built by C75, C80, C83, and C117.

It belongs to the 2Fe2S plant-type ferredoxin family. [2Fe-2S] cluster serves as cofactor.

Its subcellular location is the encapsulin nanocompartment. Its function is as follows. Cargo protein of a type 1 encapsulin nanocompartment. An iron-binding protein probably involved in iron mineralization in the encapsulin nanocompartment. 2 different cargo proteins have been identified (IMEF and Fer); when both are expressed in E.coli with the shell protein only IMEF is detected within the nanocompartment. E.coli expressing all 3 genes stores the largest amount of iron and is protected from Fe/H2O2-induced oxidative stress. This chain is Ferredoxin, found in Bacillus thermotolerans (Quasibacillus thermotolerans).